Reading from the N-terminus, the 181-residue chain is UPF0200 protein Ta0179 (181 aa).

6–13 (GMPGAGKD) contacts ATP.

This sequence belongs to the UPF0200 family.

This Thermoplasma acidophilum (strain ATCC 25905 / DSM 1728 / JCM 9062 / NBRC 15155 / AMRC-C165) protein is UPF0200 protein Ta0179.